A 286-amino-acid polypeptide reads, in one-letter code: Prohibitin-2, mitochondrial (286 aa).

Residues 1-13 (MSFNKVPNIPGAP) lie on the Mitochondrial matrix side of the membrane. The helical; Signal-anchor for type II membrane protein transmembrane segment at 14 to 32 (ALSALLKVSVIGGLGVYAL) threads the bilayer. The Mitochondrial intermembrane portion of the chain corresponds to 33-286 (TNSLYNVDGG…LQEMNLEPKK (254 aa)). A coiled-coil region spans residues 186-219 (KEFTAAIEAKQVAAQEAERAKFIVEKAEQDRRSA).

It belongs to the prohibitin family. In terms of assembly, component of a prohibitin multimeric complex in mitochondrial membranes. Mostly expressed in proliferative tissues, including vasculature, shoot and root apical tissues.

Its subcellular location is the mitochondrion inner membrane. In terms of biological role, prohibitin probably acts as a holdase/unfoldase for the stabilization of newly synthesized mitochondrial proteins. The sequence is that of Prohibitin-2, mitochondrial (PHB2) from Arabidopsis thaliana (Mouse-ear cress).